Consider the following 159-residue polypeptide: Ribosomal RNA large subunit methyltransferase H (159 aa).

S-adenosyl-L-methionine-binding positions include Leu76, Gly108, and 127 to 132; that span reads FGLLTF.

The protein belongs to the RNA methyltransferase RlmH family. As to quaternary structure, homodimer.

It is found in the cytoplasm. The catalysed reaction is pseudouridine(1915) in 23S rRNA + S-adenosyl-L-methionine = N(3)-methylpseudouridine(1915) in 23S rRNA + S-adenosyl-L-homocysteine + H(+). In terms of biological role, specifically methylates the pseudouridine at position 1915 (m3Psi1915) in 23S rRNA. The chain is Ribosomal RNA large subunit methyltransferase H from Streptococcus thermophilus (strain ATCC BAA-491 / LMD-9).